The sequence spans 277 residues: Phosphate import ATP-binding protein PstB 2 (277 aa).

One can recognise an ABC transporter domain in the interval Ile-31–Ile-272. Gly-63–Ser-70 is a binding site for ATP.

Belongs to the ABC transporter superfamily. Phosphate importer (TC 3.A.1.7) family. The complex is composed of two ATP-binding proteins (PstB), two transmembrane proteins (PstC and PstA) and a solute-binding protein (PstS).

The protein resides in the cell inner membrane. It catalyses the reaction phosphate(out) + ATP + H2O = ADP + 2 phosphate(in) + H(+). In terms of biological role, part of the ABC transporter complex PstSACB involved in phosphate import. Responsible for energy coupling to the transport system. This Pseudomonas putida (strain ATCC 47054 / DSM 6125 / CFBP 8728 / NCIMB 11950 / KT2440) protein is Phosphate import ATP-binding protein PstB 2.